The chain runs to 423 residues: Lysosomal acid phosphatase (423 aa).

Positions 1-30 are cleaved as a signal peptide; sequence MAGRQSGWSQAALLQFLLGMCLMVMPPIQA. Residues 31–380 lie on the Lumenal side of the membrane; it reads RSLRFVTLLY…QLASDTADTE (350 aa). His42 serves as the catalytic Nucleophile. N-linked (GlcNAc...) asparagine glycans are attached at residues Asn92, Asn133, Asn167, Asn177, Asn191, Asn197, and Asn267. 3 disulfides stabilise this stretch: Cys159/Cys370, Cys212/Cys310, and Cys345/Cys349. The Proton donor role is filled by Asp287. Asn322 and Asn331 each carry an N-linked (GlcNAc...) asparagine glycan. A helical transmembrane segment spans residues 381-401; it reads VIVALAVCGSILFLLIVLLLT. At 402–423 the chain is on the cytoplasmic side; that stretch reads VLFRMQAQPPGYHHVADREDHA.

The protein belongs to the histidine acid phosphatase family. Post-translationally, the membrane-bound form is converted to the soluble form by sequential proteolytic processing. First, the C-terminal cytoplasmic tail is removed. Cleavage by a lysosomal protease releases the soluble form in the lysosome lumen.

It is found in the lysosome membrane. The protein resides in the lysosome lumen. It carries out the reaction a phosphate monoester + H2O = an alcohol + phosphate. The polypeptide is Lysosomal acid phosphatase (Acp2) (Rattus norvegicus (Rat)).